We begin with the raw amino-acid sequence, 296 residues long: Protoheme IX farnesyltransferase (296 aa).

The next 9 helical transmembrane spans lie at 9-29, 36-56, 84-104, 108-128, 133-153, 163-183, 209-229, 234-254, and 265-285; these read VTKP…FLLA, YPLF…GCVF, AVSL…LWFG, LACW…SLYM, VYGT…GYCA, LILL…IAIF, ITLY…GGYA, LVVA…GYKV, and FGFS…DFMV.

It belongs to the UbiA prenyltransferase family. Protoheme IX farnesyltransferase subfamily.

Its subcellular location is the cell inner membrane. The catalysed reaction is heme b + (2E,6E)-farnesyl diphosphate + H2O = Fe(II)-heme o + diphosphate. It participates in porphyrin-containing compound metabolism; heme O biosynthesis; heme O from protoheme: step 1/1. Its function is as follows. Converts heme B (protoheme IX) to heme O by substitution of the vinyl group on carbon 2 of heme B porphyrin ring with a hydroxyethyl farnesyl side group. The protein is Protoheme IX farnesyltransferase of Citrobacter koseri (strain ATCC BAA-895 / CDC 4225-83 / SGSC4696).